The primary structure comprises 257 residues: Imidazole glycerol phosphate synthase subunit HisF (257 aa).

Residues Asp-11 and Asp-130 contribute to the active site.

It belongs to the HisA/HisF family. As to quaternary structure, heterodimer of HisH and HisF.

It is found in the cytoplasm. It catalyses the reaction 5-[(5-phospho-1-deoxy-D-ribulos-1-ylimino)methylamino]-1-(5-phospho-beta-D-ribosyl)imidazole-4-carboxamide + L-glutamine = D-erythro-1-(imidazol-4-yl)glycerol 3-phosphate + 5-amino-1-(5-phospho-beta-D-ribosyl)imidazole-4-carboxamide + L-glutamate + H(+). Its pathway is amino-acid biosynthesis; L-histidine biosynthesis; L-histidine from 5-phospho-alpha-D-ribose 1-diphosphate: step 5/9. IGPS catalyzes the conversion of PRFAR and glutamine to IGP, AICAR and glutamate. The HisF subunit catalyzes the cyclization activity that produces IGP and AICAR from PRFAR using the ammonia provided by the HisH subunit. The chain is Imidazole glycerol phosphate synthase subunit HisF from Francisella philomiragia subsp. philomiragia (strain ATCC 25017 / CCUG 19701 / FSC 153 / O#319-036).